The chain runs to 554 residues: 2-succinyl-5-enolpyruvyl-6-hydroxy-3-cyclohexene-1-carboxylate synthase (554 aa).

Belongs to the TPP enzyme family. MenD subfamily. As to quaternary structure, homodimer. Requires Mg(2+) as cofactor. It depends on Mn(2+) as a cofactor. The cofactor is thiamine diphosphate.

The enzyme catalyses isochorismate + 2-oxoglutarate + H(+) = 5-enolpyruvoyl-6-hydroxy-2-succinyl-cyclohex-3-ene-1-carboxylate + CO2. Its pathway is quinol/quinone metabolism; 1,4-dihydroxy-2-naphthoate biosynthesis; 1,4-dihydroxy-2-naphthoate from chorismate: step 2/7. It functions in the pathway quinol/quinone metabolism; menaquinone biosynthesis. Catalyzes the thiamine diphosphate-dependent decarboxylation of 2-oxoglutarate and the subsequent addition of the resulting succinic semialdehyde-thiamine pyrophosphate anion to isochorismate to yield 2-succinyl-5-enolpyruvyl-6-hydroxy-3-cyclohexene-1-carboxylate (SEPHCHC). The polypeptide is 2-succinyl-5-enolpyruvyl-6-hydroxy-3-cyclohexene-1-carboxylate synthase (Renibacterium salmoninarum (strain ATCC 33209 / DSM 20767 / JCM 11484 / NBRC 15589 / NCIMB 2235)).